The following is a 597-amino-acid chain: Elongation factor 4 (597 aa).

The 183-residue stretch at aspartate 2–lysine 184 folds into the tr-type G domain. Residues aspartate 14–threonine 19 and asparagine 131–aspartate 134 each bind GTP.

Belongs to the TRAFAC class translation factor GTPase superfamily. Classic translation factor GTPase family. LepA subfamily.

The protein localises to the cell inner membrane. The enzyme catalyses GTP + H2O = GDP + phosphate + H(+). Its function is as follows. Required for accurate and efficient protein synthesis under certain stress conditions. May act as a fidelity factor of the translation reaction, by catalyzing a one-codon backward translocation of tRNAs on improperly translocated ribosomes. Back-translocation proceeds from a post-translocation (POST) complex to a pre-translocation (PRE) complex, thus giving elongation factor G a second chance to translocate the tRNAs correctly. Binds to ribosomes in a GTP-dependent manner. The sequence is that of Elongation factor 4 from Burkholderia multivorans (strain ATCC 17616 / 249).